The following is a 158-amino-acid chain: UPF0102 protein GbCGDNIH1_0975 (158 aa).

Belongs to the UPF0102 family.

The protein is UPF0102 protein GbCGDNIH1_0975 of Granulibacter bethesdensis (strain ATCC BAA-1260 / CGDNIH1).